The primary structure comprises 218 residues: Pyridoxine/pyridoxamine 5'-phosphate oxidase (218 aa).

Substrate-binding positions include 12–15 and arginine 70; that span reads RLSY. FMN contacts are provided by residues 65–70, 80–81, lysine 87, and glutamine 109; these read RTVLLR and YT. Residues tyrosine 127, arginine 131, and serine 135 each coordinate substrate. Residues 145–146 and tryptophan 191 contribute to the FMN site; that span reads QS. 197 to 199 lines the substrate pocket; sequence RLH. FMN is bound at residue arginine 201.

It belongs to the pyridoxamine 5'-phosphate oxidase family. In terms of assembly, homodimer. FMN is required as a cofactor.

It carries out the reaction pyridoxamine 5'-phosphate + O2 + H2O = pyridoxal 5'-phosphate + H2O2 + NH4(+). It catalyses the reaction pyridoxine 5'-phosphate + O2 = pyridoxal 5'-phosphate + H2O2. It functions in the pathway cofactor metabolism; pyridoxal 5'-phosphate salvage; pyridoxal 5'-phosphate from pyridoxamine 5'-phosphate: step 1/1. Its pathway is cofactor metabolism; pyridoxal 5'-phosphate salvage; pyridoxal 5'-phosphate from pyridoxine 5'-phosphate: step 1/1. Functionally, catalyzes the oxidation of either pyridoxine 5'-phosphate (PNP) or pyridoxamine 5'-phosphate (PMP) into pyridoxal 5'-phosphate (PLP). The sequence is that of Pyridoxine/pyridoxamine 5'-phosphate oxidase from Acinetobacter baumannii (strain AB0057).